The following is a 46-amino-acid chain: Photosystem II reaction center protein K (46 aa).

The propeptide occupies 1-9; the sequence is MLILLNTFA. The chain crosses the membrane as a helical span at residues 25-45; that stretch reads LPLIPLFFFLLVFVWQAAVGF.

It belongs to the PsbK family. As to quaternary structure, PSII is composed of 1 copy each of membrane proteins PsbA, PsbB, PsbC, PsbD, PsbE, PsbF, PsbH, PsbI, PsbJ, PsbK, PsbL, PsbM, PsbT, PsbX, PsbY, Psb30/Ycf12, peripheral proteins PsbO, CyanoQ (PsbQ), PsbU, PsbV and a large number of cofactors. It forms dimeric complexes.

It localises to the cellular thylakoid membrane. In terms of biological role, one of the components of the core complex of photosystem II (PSII). PSII is a light-driven water:plastoquinone oxidoreductase that uses light energy to abstract electrons from H(2)O, generating O(2) and a proton gradient subsequently used for ATP formation. It consists of a core antenna complex that captures photons, and an electron transfer chain that converts photonic excitation into a charge separation. This is Photosystem II reaction center protein K from Prochlorococcus marinus (strain MIT 9215).